The following is a 319-amino-acid chain: Type II secretion system protein C 2 (319 aa).

The Cytoplasmic segment spans residues 1–42; that stretch reads MARVVFRDARIYLIQWLTKIRHTLNQRQSLNTDKEHLRKIVR. Residues 43 to 65 traverse the membrane as a helical segment; sequence GMFWLMLLIISAKVAHSLWRYFS. The Periplasmic portion of the chain corresponds to 66-319; sequence FSAEYTAVSP…ARHDISIALR (254 aa).

It belongs to the GSP C family. As to quaternary structure, interacts with outer cell membrane protein GspD2 in the periplasm.

Its subcellular location is the cell inner membrane. Functionally, involved in a type II secretion system (T2SS, formerly general secretion pathway, GSP) for the export of folded proteins across the outer membrane. The polypeptide is Type II secretion system protein C 2 (gspC2) (Escherichia coli O78:H11 (strain H10407 / ETEC)).